We begin with the raw amino-acid sequence, 452 residues long: MATSIKSITLALLIFSVLLISLSLGSVTATETTRNEAEARRMYERWLVENRKNYNGLGEKERRFEIFKDNLKFVEEHSSIPNRTYEVGLTRFADLTNDEFRAIYLRSKMERTRVPVKGEKYLYKVGDSLPDAIDWRAKGAVNPVKDQGSCGSCWAFSAIGAVEGINQIKTGELISLSEQELVDCDTSYNDGCGGGLMDYAFKFIIENGGIDTEEDYPYIATDVNVCNSDKKNTRVVTIDGYEDVPQNDEKSLKKALANQPISVAIEAGGRAFQLYTSGVFTGTCGTSLDHGVVAVGYGSEGGQDYWIVRNSWGSNWGESGYFKLERNIKESSGKCGVAMMASYPTKSSGSNPPKPPAPSPVVCDKSNTCPAKSTCCCLYEYNGKCYSWGCCPYESATCCDDGSSCCPQSYPVCDLKANTCRMKGNSPLSIKALTRGPAIATTKSTNMLVGSA.

A signal peptide spans 1–29 (MATSIKSITLALLIFSVLLISLSLGSVTA). A propeptide spans 30 to 128 (TETTRNEAEA…EKYLYKVGDS (99 aa)) (activation peptide). Asn82 carries N-linked (GlcNAc...) asparagine glycosylation. 5 disulfides stabilise this stretch: Cys150–Cys192, Cys184–Cys226, Cys284–Cys335, Cys363–Cys375, and Cys369–Cys390. Cys153 is a catalytic residue. Catalysis depends on residues His290 and Asn310. Positions 346-452 (KSSGSNPPKP…KSTNMLVGSA (107 aa)) are cleaved as a propeptide — removed in mature form.

The protein belongs to the peptidase C1 family. As to quaternary structure, interacts with WSCP.

Functionally, probable thiol protease. In Arabidopsis thaliana (Mouse-ear cress), this protein is Probable cysteine protease RD21C.